A 210-amino-acid chain; its full sequence is Probable nicotinate-nucleotide adenylyltransferase (210 aa).

This sequence belongs to the NadD family.

It carries out the reaction nicotinate beta-D-ribonucleotide + ATP + H(+) = deamido-NAD(+) + diphosphate. It participates in cofactor biosynthesis; NAD(+) biosynthesis; deamido-NAD(+) from nicotinate D-ribonucleotide: step 1/1. Its function is as follows. Catalyzes the reversible adenylation of nicotinate mononucleotide (NaMN) to nicotinic acid adenine dinucleotide (NaAD). The protein is Probable nicotinate-nucleotide adenylyltransferase of Streptococcus pyogenes serotype M3 (strain ATCC BAA-595 / MGAS315).